We begin with the raw amino-acid sequence, 349 residues long: E3 ubiquitin-protein ligase rnf146 (349 aa).

The tract at residues 1 to 21 (MASCGEVDHSVSSLPSSKKGS) is disordered. Positions 10-21 (SVSSLPSSKKGS) are enriched in low complexity. An RING-type zinc finger spans residues 41–79 (CAICLQSCVHPVQLPCRHVFCFLCVKGASWQSKRCALCR). The WWE domain maps to 97 to 173 (ELKTGGRGAT…EHGRRRKIKR (77 aa)). Tyr-113, Arg-116, Trp-120, Tyr-150, Gln-159, Arg-169, and Lys-181 together coordinate a glycoprotein. Disordered regions lie at residues 226–251 (TTVL…SPSL) and 264–349 (DAPE…CTEV). A compositionally biased stretch (polar residues) spans 283–292 (SMSSSPNTYA). The span at 298–307 (WSDDEGDGEA) shows a compositional bias: acidic residues. Residues 308–317 (VEPREQRLRL) are compositionally biased toward basic and acidic residues.

It is found in the cytoplasm. Its subcellular location is the cytosol. The protein localises to the nucleus. It catalyses the reaction S-ubiquitinyl-[E2 ubiquitin-conjugating enzyme]-L-cysteine + [acceptor protein]-L-lysine = [E2 ubiquitin-conjugating enzyme]-L-cysteine + N(6)-ubiquitinyl-[acceptor protein]-L-lysine.. Its pathway is protein modification; protein ubiquitination. Functionally, E3 ubiquitin-protein ligase that specifically binds poly-ADP-ribosylated proteins and mediates their ubiquitination and subsequent degradation. May regulate many important biological processes, such as cell survival and DNA damage response. Acts as an activator of the Wnt signaling pathway by mediating the ubiquitination of poly-ADP-ribosylated proteins. Neuroprotective protein. Protects against cell death induced by DNA damaging agents and rescues cells from G1 arrest. Promotes cell survival after gamma-irradiation. Facilitates DNA repair. The protein is E3 ubiquitin-protein ligase rnf146 (rnf146) of Salmo salar (Atlantic salmon).